We begin with the raw amino-acid sequence, 359 residues long: AA9 family lytic polysaccharide monooxygenase B (359 aa).

The first 18 residues, 1 to 18 (MQLFTSFSLLAVASFASA), serve as a signal peptide directing secretion. Cu(2+) contacts are provided by H19 and H102. 2 cysteine pairs are disulfide-bonded: C72–C190 and C113–C117. N150 carries an N-linked (GlcNAc...) asparagine glycan. Residues H176 and Q185 each coordinate O2. Y187 lines the Cu(2+) pocket. Residues 241 to 310 (GGSPGNSAEP…STNINPTSLK (70 aa)) form a disordered region. Residues 245-254 (GNSAEPQPQH) are compositionally biased toward polar residues. The segment covering 255-304 (TSTAVSTAKTASTSSLTTSVTITSQAPSNTANPPQSITTTTTPKPQSTNI) has biased composition (low complexity). N345 is a glycosylation site (N-linked (GlcNAc...) asparagine).

This sequence belongs to the polysaccharide monooxygenase AA9 family. Requires Cu(2+) as cofactor.

The protein localises to the secreted. The catalysed reaction is [(1-&gt;4)-beta-D-glucosyl]n+m + reduced acceptor + O2 = 4-dehydro-beta-D-glucosyl-[(1-&gt;4)-beta-D-glucosyl]n-1 + [(1-&gt;4)-beta-D-glucosyl]m + acceptor + H2O.. In terms of biological role, lytic polysaccharide monooxygenase (LPMO) that depolymerizes crystalline and amorphous polysaccharides via the oxidation of scissile alpha- or beta-(1-4)-glycosidic bonds, yielding C1 and C4 oxidation products. Catalysis by LPMOs requires the reduction of the active-site copper from Cu(II) to Cu(I) by a reducing agent and H(2)O(2) or O(2) as a cosubstrate. Active on cellulose and on xyloglucan for deconstruction of plant biomass. This is AA9 family lytic polysaccharide monooxygenase B from Geotrichum candidum (Oospora lactis).